The chain runs to 135 residues: ATP synthase epsilon chain (135 aa).

A compositionally biased stretch (basic and acidic residues) spans 89-100 (SGKAEAELEKAK). Residues 89–114 (SGKAEAELEKAKNQLSQNKDQGNSPE) are disordered. Positions 101–112 (NQLSQNKDQGNS) are enriched in polar residues.

Belongs to the ATPase epsilon chain family. As to quaternary structure, F-type ATPases have 2 components, CF(1) - the catalytic core - and CF(0) - the membrane proton channel. CF(1) has five subunits: alpha(3), beta(3), gamma(1), delta(1), epsilon(1). CF(0) has three main subunits: a, b and c.

It localises to the cellular thylakoid membrane. Functionally, produces ATP from ADP in the presence of a proton gradient across the membrane. This is ATP synthase epsilon chain from Prochlorococcus marinus (strain NATL2A).